A 316-amino-acid chain; its full sequence is Probable cell division protein WhiA (316 aa).

Positions 276–309 (SLEELGKIAEPQITKDAIAGRIRRLLQLAEKTEK) form a DNA-binding region, H-T-H motif.

Belongs to the WhiA family.

Functionally, involved in cell division and chromosome segregation. The protein is Probable cell division protein WhiA of Bifidobacterium longum subsp. infantis (strain ATCC 15697 / DSM 20088 / JCM 1222 / NCTC 11817 / S12).